A 77-amino-acid chain; its full sequence is Large ribosomal subunit protein bL31 (77 aa).

The protein belongs to the bacterial ribosomal protein bL31 family. Type A subfamily. Part of the 50S ribosomal subunit.

Functionally, binds the 23S rRNA. The protein is Large ribosomal subunit protein bL31 of Paramagnetospirillum magneticum (strain ATCC 700264 / AMB-1) (Magnetospirillum magneticum).